The chain runs to 442 residues: Histidine--tRNA ligase (442 aa).

The protein belongs to the class-II aminoacyl-tRNA synthetase family. Homodimer.

The protein resides in the cytoplasm. The enzyme catalyses tRNA(His) + L-histidine + ATP = L-histidyl-tRNA(His) + AMP + diphosphate + H(+). This Helicobacter pylori (strain HPAG1) protein is Histidine--tRNA ligase.